Consider the following 199-residue polypeptide: uncharacterized protein (199 aa).

The helical transmembrane segment at 17–37 (AGAVTLGIGFFALASALWFLI) threads the bilayer.

It localises to the membrane. This is an uncharacterized protein from Homo sapiens (Human).